The chain runs to 689 residues: DNA ligase (689 aa).

Residues 58–62 (DQEYD), 107–108 (SL), and Glu-138 each bind NAD(+). Lys-140 serves as the catalytic N6-AMP-lysine intermediate. 4 residues coordinate NAD(+): Arg-161, Glu-198, Lys-314, and Lys-338. Zn(2+) contacts are provided by Cys-432, Cys-435, Cys-448, and Cys-453. A BRCT domain is found at 611-689 (ASSGTLSGKT…QELLEMLHGG (79 aa)).

The protein belongs to the NAD-dependent DNA ligase family. LigA subfamily. Mg(2+) is required as a cofactor. It depends on Mn(2+) as a cofactor.

It catalyses the reaction NAD(+) + (deoxyribonucleotide)n-3'-hydroxyl + 5'-phospho-(deoxyribonucleotide)m = (deoxyribonucleotide)n+m + AMP + beta-nicotinamide D-nucleotide.. In terms of biological role, DNA ligase that catalyzes the formation of phosphodiester linkages between 5'-phosphoryl and 3'-hydroxyl groups in double-stranded DNA using NAD as a coenzyme and as the energy source for the reaction. It is essential for DNA replication and repair of damaged DNA. This Methylacidiphilum infernorum (isolate V4) (Methylokorus infernorum (strain V4)) protein is DNA ligase.